A 109-amino-acid polypeptide reads, in one-letter code: UPF0122 protein CLL_A1244 (109 aa).

It belongs to the UPF0122 family.

Its function is as follows. Might take part in the signal recognition particle (SRP) pathway. This is inferred from the conservation of its genetic proximity to ftsY/ffh. May be a regulatory protein. The protein is UPF0122 protein CLL_A1244 of Clostridium botulinum (strain Eklund 17B / Type B).